A 1034-amino-acid chain; its full sequence is Putative beta-glucuronidase (1034 aa).

E432 serves as the catalytic Proton donor. In terms of domain architecture, CBM6 spans 909–1034; that stretch reads VDISAEEGVL…GPFIDELFID (126 aa).

The protein belongs to the glycosyl hydrolase 2 family.

The protein localises to the cytoplasm. It catalyses the reaction a beta-D-glucuronoside + H2O = D-glucuronate + an alcohol. In terms of biological role, glycoside hydrolase that may be involved in ulvan degradation. Ulvan is the main polysaccharide component of the Ulvales (green seaweed) cell wall. It is composed of disaccharide building blocks comprising 3-sulfated rhamnose (Rha3S) linked to D-glucuronic acid (GlcA), L-iduronic acid (IduA), or D-xylose (Xyl). The sequence is that of Putative beta-glucuronidase from Formosa agariphila (strain DSM 15362 / KCTC 12365 / LMG 23005 / KMM 3901 / M-2Alg 35-1).